A 248-amino-acid chain; its full sequence is tRNA (guanine-N(1)-)-methyltransferase (248 aa).

Residues Gly-114 and 134-139 contribute to the S-adenosyl-L-methionine site; that span reads IGDYVL.

Belongs to the RNA methyltransferase TrmD family. Homodimer.

The protein resides in the cytoplasm. The catalysed reaction is guanosine(37) in tRNA + S-adenosyl-L-methionine = N(1)-methylguanosine(37) in tRNA + S-adenosyl-L-homocysteine + H(+). Functionally, specifically methylates guanosine-37 in various tRNAs. The sequence is that of tRNA (guanine-N(1)-)-methyltransferase from Blochmanniella floridana.